Reading from the N-terminus, the 592-residue chain is Ferric-chelate reductase 1 (592 aa).

Residues 2–22 (AAPQITLSVLVIALLTCSVTA) form a helical membrane-spanning segment. The Reelin domain occupies 13–179 (IALLTCSVTA…FTTPKATTQP (167 aa)). 4 N-linked (GlcNAc...) asparagine glycosylation sites follow: Asn85, Asn308, Asn321, and Asn353. The DOMON domain maps to 216 to 331 (EPACVFLSFT…ESYYIFFAEG (116 aa)). The region spanning 335–534 (DGRIFRHSQQ…IGTEVILEIH (200 aa)) is the Cytochrome b561 domain. The helical transmembrane segment at 372–392 (AHGALMFVAWMTTVSIGVLVA) threads the bilayer. Positions 373 and 414 each coordinate heme b. 5 consecutive transmembrane segments (helical) span residues 415-435 (RMLM…PFVY), 446-466 (HPYL…LATF), 477-499 (VFNW…AMFL), 515-535 (YAMM…EIHA), and 569-589 (VVLA…LSAI). His446 and His482 together coordinate heme b.

This sequence belongs to the FRRS1 family. The cofactor is heme b. Expressed in spleen, liver and kidney with low expression in brain. Localizes in adult brain to the choroid plexus of the fourth, third, and lateral ventricles and to ependymal cells that line the ventricles.

The protein localises to the membrane. Functionally, ferric-chelate reductases reduce Fe(3+) to Fe(2+) before its transport from the endosome to the cytoplasm. In Mus musculus (Mouse), this protein is Ferric-chelate reductase 1 (FRRS1).